The primary structure comprises 153 residues: ASMLPLDKCFKASFCGDDSLIYLPKGLEYPDIQATANLVWNFEAKLFRKKYGYFCGKYIIHHANGCIVYPDPLKLISKLGNKSLVGYEHVEEFRISLLDVAHSLFNGAYFHLLDDAIHELFPNAGGCSFVINCLCKYLSDKRLFRSLYIDVSK.

The protein belongs to the tobamovirus RNA-directed RNA polymerase family.

It carries out the reaction RNA(n) + a ribonucleoside 5'-triphosphate = RNA(n+1) + diphosphate. Its function is as follows. The replicase large subunit is an RNA-dependent RNA polymerase active in viral RNA replication. The chain is Replicase large subunit from Citrullus (Cucumber).